The primary structure comprises 176 residues: Large ribosomal subunit protein eL20 (176 aa).

It belongs to the eukaryotic ribosomal protein eL20 family. In terms of assembly, component of the large ribosomal subunit.

Its subcellular location is the cytoplasm. In terms of biological role, component of the large ribosomal subunit. The ribosome is a large ribonucleoprotein complex responsible for the synthesis of proteins in the cell. This Ictalurus punctatus (Channel catfish) protein is Large ribosomal subunit protein eL20 (rpl18a).